The sequence spans 745 residues: UPF0508 protein YJR030C (745 aa).

Belongs to the UPF0508 family.

This Saccharomyces cerevisiae (strain ATCC 204508 / S288c) (Baker's yeast) protein is UPF0508 protein YJR030C.